The chain runs to 1025 residues: Kinesin-like protein KIN-14P (1025 aa).

2 disordered regions span residues 1–87 (MNPM…MHHG) and 263–286 (YSQI…NEEE). Positions 15–28 (STPRSPFSPFSPLS) are enriched in low complexity. Positions 29 to 41 (VDDRHRNHADTKT) are enriched in basic and acidic residues. Residues 42–53 (PRSPFSPFSPLS) are compositionally biased toward low complexity. Polar residues predominate over residues 65-75 (KFQQALASSGQ). Residues 203–425 (HEIATQQLRQ…REMEKKSESN (223 aa)) adopt a coiled-coil conformation. Over residues 270-286 (TKTEKSKWEEQKKNEEE) the composition is skewed to basic and acidic residues. The Kinesin motor domain maps to 509 to 838 (NIRVFCRVRP…LKFAERVSGV (330 aa)). 593 to 600 (GQTGSGKT) provides a ligand contact to ATP. Residues 847-879 (KEGKDVRDLMEQLASLKDTIARKDEEIERLQHQ) adopt a coiled-coil conformation. 3 disordered regions span residues 881 to 926 (QRLQ…SAEA), 939 to 977 (AASM…RPLD), and 994 to 1025 (TGLT…KRWA). 2 stretches are compositionally biased toward polar residues: residues 901–913 (SDTG…SRYS) and 939–948 (AASMGTQGSI). Positions 950–962 (VTKRPPRISDRAK) are enriched in basic and acidic residues. Composition is skewed to low complexity over residues 963-974 (SVTAKSSTSVTR) and 998-1016 (SSSK…STSS).

It belongs to the TRAFAC class myosin-kinesin ATPase superfamily. Kinesin family. KIN-14 subfamily.

This chain is Kinesin-like protein KIN-14P, found in Arabidopsis thaliana (Mouse-ear cress).